Consider the following 186-residue polypeptide: Threonylcarbamoyl-AMP synthase (186 aa).

The region spanning 2-186 is the YrdC-like domain; it reads PNEFELAVAA…ARTGAIIRPS (185 aa).

Belongs to the SUA5 family. TsaC subfamily.

The protein resides in the cytoplasm. The enzyme catalyses L-threonine + hydrogencarbonate + ATP = L-threonylcarbamoyladenylate + diphosphate + H2O. Required for the formation of a threonylcarbamoyl group on adenosine at position 37 (t(6)A37) in tRNAs that read codons beginning with adenine. Catalyzes the conversion of L-threonine, HCO(3)(-)/CO(2) and ATP to give threonylcarbamoyl-AMP (TC-AMP) as the acyladenylate intermediate, with the release of diphosphate. This is Threonylcarbamoyl-AMP synthase from Aeromonas hydrophila subsp. hydrophila (strain ATCC 7966 / DSM 30187 / BCRC 13018 / CCUG 14551 / JCM 1027 / KCTC 2358 / NCIMB 9240 / NCTC 8049).